The primary structure comprises 186 residues: Holliday junction branch migration complex subunit RuvA (186 aa).

A domain I region spans residues 1–63; sequence MNDYINGFLY…DNHFKYYGFF (63 aa). The interval 64-137 is domain II; the sequence is NQLVRDLFEI…QKELFNNKIS (74 aa). Position 137 (serine 137) is a region of interest, flexible linker. The domain III stretch occupies residues 137–186; sequence SEKKNKVITSLEKLGYKTKDIYKIIINVDEDLTIDELTKYVLEKLSYINN.

The protein belongs to the RuvA family. As to quaternary structure, homotetramer. Forms an RuvA(8)-RuvB(12)-Holliday junction (HJ) complex. HJ DNA is sandwiched between 2 RuvA tetramers; dsDNA enters through RuvA and exits via RuvB. An RuvB hexamer assembles on each DNA strand where it exits the tetramer. Each RuvB hexamer is contacted by two RuvA subunits (via domain III) on 2 adjacent RuvB subunits; this complex drives branch migration. In the full resolvosome a probable DNA-RuvA(4)-RuvB(12)-RuvC(2) complex forms which resolves the HJ.

The protein resides in the cytoplasm. Its function is as follows. The RuvA-RuvB-RuvC complex processes Holliday junction (HJ) DNA during genetic recombination and DNA repair, while the RuvA-RuvB complex plays an important role in the rescue of blocked DNA replication forks via replication fork reversal (RFR). RuvA specifically binds to HJ cruciform DNA, conferring on it an open structure. The RuvB hexamer acts as an ATP-dependent pump, pulling dsDNA into and through the RuvAB complex. HJ branch migration allows RuvC to scan DNA until it finds its consensus sequence, where it cleaves and resolves the cruciform DNA. The polypeptide is Holliday junction branch migration complex subunit RuvA (Mycoplasma capricolum subsp. capricolum (strain California kid / ATCC 27343 / NCTC 10154)).